The primary structure comprises 363 residues: Aspartate carbamoyltransferase, chloroplastic (363 aa).

The segment at 1–21 is disordered; the sequence is MAAARATLPLPRVPAPSPRPQ. A chloroplast-targeting transit peptide spans 1–36; that stretch reads MAAARATLPLPRVPAPSPRPQLRPFPSLPARRGAVA. The span at 11 to 21 shows a compositional bias: pro residues; sequence PRVPAPSPRPQ. Carbamoyl phosphate-binding residues include R109 and T110. The UMP site is built by R109 and T110. Position 139 (K139) interacts with L-aspartate. Residues R160, H188, and Q191 each contribute to the carbamoyl phosphate site. R160 and H188 together coordinate UMP. Residues R221 and R283 each coordinate UMP. Positions 221 and 283 each coordinate L-aspartate. Carbamoyl phosphate-binding residues include L323 and P324.

It belongs to the aspartate/ornithine carbamoyltransferase superfamily. ATCase family. As to quaternary structure, homotrimer.

Its subcellular location is the plastid. The protein resides in the chloroplast. The enzyme catalyses carbamoyl phosphate + L-aspartate = N-carbamoyl-L-aspartate + phosphate + H(+). It participates in pyrimidine metabolism; UMP biosynthesis via de novo pathway; (S)-dihydroorotate from bicarbonate: step 2/3. With respect to regulation, feedback inhibited by UMP. Catalyzes the condensation of carbamoyl phosphate and aspartate to form carbamoyl aspartate and inorganic phosphate, the committed step in the de novo pyrimidine nucleotide biosynthesis pathway. The chain is Aspartate carbamoyltransferase, chloroplastic (PYRB) from Oryza sativa subsp. japonica (Rice).